Here is a 275-residue protein sequence, read N- to C-terminus: Lectin (275 aa).

Positions 1-30 (MASLQTQMISFYLIFLSILLTTIFFFKVNS) are cleaved as a signal peptide. 2 residues coordinate D-glucose: aspartate 111 and glycine 129. Mn(2+) is bound by residues glutamate 149 and aspartate 151. The Ca(2+) site is built by aspartate 151, phenylalanine 153, asparagine 155, and aspartate 159. Mn(2+)-binding residues include aspartate 159 and histidine 166. Positions 211 to 217 (NSLEEEN) are excised as a propeptide. Residues glycine 246 and alanine 247 each contribute to the D-glucose site. A propeptide spanning residues 270–275 (KQAADA) is cleaved from the precursor.

The protein belongs to the leguminous lectin family. Heterotetramer of two alpha and two beta chains. Post-translationally, the mature form consists of two chains, alpha and beta, produced by cleavage of the immature protein. These remain cleaved, yet fold together to form one subunit.

Functionally, D-mannose specific lectin. The protein is Lectin of Lens culinaris (Lentil).